We begin with the raw amino-acid sequence, 308 residues long: MKIIPLASESLGVRSLALFLRIGKVGILIDPGVALGPKRYSLPPAQAEMKALAVAREKIQEYAKKAQIVTISHYHYDHHTPFFEGLYESSSIEKAKEIYTGKILLIKHPQENINHSQRKRAQEFLKNAREIAREISSADSKTFDFGEFIIEFSPPVPHGREGSKLGYVVMTLVDDGKTRIVHASDSQLINDRAIDWIIEKNPDILIAGGPPTYLSYRVGNVREVGIKNINRIIAETNAKLVIDHHVVRDKNYENFFQELDKTPQTFAEFLGVKSAPLEAYRKELHKLEKGEDVELPKGIQKFLKGLPP.

This sequence belongs to the UPF0282 family.

This is UPF0282 protein PYRAB09800 from Pyrococcus abyssi (strain GE5 / Orsay).